The sequence spans 214 residues: Glucose-6-phosphate isomerase (214 aa).

4 residues coordinate Fe cation: His-92, His-94, Glu-101, and His-140.

Belongs to the archaeal-type GPI family. Homodimer.

The protein localises to the cytoplasm. The enzyme catalyses alpha-D-glucose 6-phosphate = beta-D-fructose 6-phosphate. The protein operates within carbohydrate degradation; glycolysis; D-glyceraldehyde 3-phosphate and glycerone phosphate from D-glucose: step 2/4. In Sinorhizobium medicae (strain WSM419) (Ensifer medicae), this protein is Glucose-6-phosphate isomerase.